Reading from the N-terminus, the 162-residue chain is G/U mismatch-specific DNA glycosylase (162 aa).

This sequence belongs to the uracil-DNA glycosylase (UDG) superfamily. TDG/mug family. As to quaternary structure, binds DNA as a monomer.

The protein localises to the cytoplasm. The enzyme catalyses Specifically hydrolyzes mismatched double-stranded DNA and polynucleotides, releasing free uracil.. Functionally, excises ethenocytosine and uracil, which can arise by alkylation or deamination of cytosine, respectively, from the corresponding mispairs with guanine in ds-DNA. It is capable of hydrolyzing the carbon-nitrogen bond between the sugar-phosphate backbone of the DNA and the mispaired base. The complementary strand guanine functions in substrate recognition. Required for DNA damage lesion repair in stationary-phase cells. This Serratia proteamaculans (strain 568) protein is G/U mismatch-specific DNA glycosylase.